Consider the following 384-residue polypeptide: Cytochrome b (384 aa).

4 helical membrane-spanning segments follow: residues 32–52 (FGSL…FLSM), 75–96 (FLLR…YFHI), 111–131 (WRVG…GYVL), and 176–196 (FFSL…VHLI). His81 and His95 together coordinate heme b. Heme b-binding residues include His180 and His194. An a ubiquinone-binding site is contributed by His199. 4 consecutive transmembrane segments (helical) span residues 224 to 244 (SKDW…VYLM), 286 to 306 (FGGV…PLLH), 318 to 338 (FGRM…WIGS), and 345 to 366 (FIII…LIPL).

It belongs to the cytochrome b family. In terms of assembly, the main subunits of complex b-c1 are: cytochrome b, cytochrome c1 and the Rieske protein. Requires heme b as cofactor.

The protein localises to the mitochondrion inner membrane. Component of the ubiquinol-cytochrome c reductase complex (complex III or cytochrome b-c1 complex) that is part of the mitochondrial respiratory chain. The b-c1 complex mediates electron transfer from ubiquinol to cytochrome c. Contributes to the generation of a proton gradient across the mitochondrial membrane that is then used for ATP synthesis. This chain is Cytochrome b (MT-CYB), found in Acropora tenuis (Purple tipped acropora).